A 391-amino-acid chain; its full sequence is Odorant receptor 67d (391 aa).

Residues 1 to 45 (MLKMAKVEPVERYCKVIRMIRFCVGFCGNDVADPNFRMWWLTYAV) lie on the Cytoplasmic side of the membrane. A helical transmembrane segment spans residues 46–66 (MAAIAFFFACTGYTIYVGVVI). Residues 67-71 (NGDLT) are Extracellular-facing. The chain crosses the membrane as a helical span at residues 72-92 (IILQALAMVGSAVQGLTKLLV). At 93–140 (TANNASHMREVQNTYEDIYREYGSKGDEYAKCLEKRIRITWTLLIGFM) the chain is on the cytoplasmic side. A helical transmembrane segment spans residues 141–161 (LVYIILLGLVITFPIFYLLIL). Topologically, residues 162-164 (HQK) are extracellular. The helical transmembrane segment at 165–185 (VLVMQFLIPFLDHTTDGGHLI) threads the bilayer. The Cytoplasmic portion of the chain corresponds to 186-191 (LTAAHV). The helical transmembrane segment at 192–212 (ILITFGGFGNYGGDMYLFLFV) threads the bilayer. Residues 213–268 (THVPLIKDIFCVKLTEFNELVMKRNDFPKVRAMLCDLLVWHQLYTRMLQTTKKIYS) lie on the Extracellular side of the membrane. The helical transmembrane segment at 269–289 (IVLFVQLSTTCVGLLCTISCI) threads the bilayer. The Cytoplasmic portion of the chain corresponds to 290-297 (FMKAWPAA). Residues 298-318 (PLYLLYAAITLYTFCGLGTLV) traverse the membrane as a helical segment. Residues 319-391 (ENSNEDFLSV…FSMMLMNYLG (73 aa)) are Extracellular-facing.

It belongs to the insect chemoreceptor superfamily. Heteromeric odorant receptor channel (TC 1.A.69) family. Or67d subfamily. Interacts with Orco. Complexes exist early in the endomembrane system in olfactory sensory neurons (OSNs), coupling these complexes to the conserved ciliary trafficking pathway. As to expression, expressed in antenna.

The protein resides in the cell membrane. Functionally, plays a role in detection and sensitivity to pheromones and signal transduction of the fatty-acid-derived male pheromone 11-cis vaccenyl acetate (cVA). Acts in concert with Snmp and lush to capture cVA molecules on the surface of Or67d expressing olfactory dendrites and facilitate their transfer to the odorant-receptor Orco complex. Necessary to mediate behavioral responses to cVA by regulating both male and female mating behavior. Activation of Or67d neurons by cVA inhibits courtship of other males, whereas in females their activation promotes receptivity to other males. May form a complex with Orco to form odorant-sensing units, providing sensitive and prolonged odorant signaling and calcium permeability. The polypeptide is Odorant receptor 67d (Or67d) (Drosophila melanogaster (Fruit fly)).